Reading from the N-terminus, the 172-residue chain is Nicotinamide-nucleotide adenylyltransferase (172 aa).

It belongs to the archaeal NMN adenylyltransferase family.

Its subcellular location is the cytoplasm. The enzyme catalyses beta-nicotinamide D-ribonucleotide + ATP + H(+) = diphosphate + NAD(+). It functions in the pathway cofactor biosynthesis; NAD(+) biosynthesis; NAD(+) from nicotinamide D-ribonucleotide: step 1/1. The sequence is that of Nicotinamide-nucleotide adenylyltransferase from Sulfurisphaera tokodaii (strain DSM 16993 / JCM 10545 / NBRC 100140 / 7) (Sulfolobus tokodaii).